Consider the following 147-residue polypeptide: UPF0216 protein MK1676 (147 aa).

This sequence belongs to the UPF0216 family.

In Methanopyrus kandleri (strain AV19 / DSM 6324 / JCM 9639 / NBRC 100938), this protein is UPF0216 protein MK1676.